Here is a 91-residue protein sequence, read N- to C-terminus: uncharacterized protein (91 aa).

A helical transmembrane segment spans residues 12–34 (FAIVYANITFLFYYLLDFTLPFH).

Its subcellular location is the membrane. This is an uncharacterized protein from Saccharomyces cerevisiae (strain ATCC 204508 / S288c) (Baker's yeast).